The sequence spans 66 residues: Large ribosomal subunit protein uL29 (66 aa).

Belongs to the universal ribosomal protein uL29 family.

The sequence is that of Large ribosomal subunit protein uL29 from Thermoplasma volcanium (strain ATCC 51530 / DSM 4299 / JCM 9571 / NBRC 15438 / GSS1).